A 401-amino-acid chain; its full sequence is Elongation factor Tu, apicoplast (401 aa).

The 197-residue stretch at 10–206 folds into the tr-type G domain; the sequence is KPHINIGTIG…ALDSYIPLPK (197 aa). The tract at residues 19–26 is G1; the sequence is GHVDHGKT. 19-26 is a GTP binding site; that stretch reads GHVDHGKT. T26 is a binding site for Mg(2+). The segment at 60–64 is G2; it reads GITIK. The tract at residues 81–84 is G3; the sequence is DCPG. GTP is bound by residues 81-85 and 136-139; these read DCPGH and NKID. The tract at residues 136-139 is G4; that stretch reads NKID. The tract at residues 173-175 is G5; sequence SAL.

It belongs to the TRAFAC class translation factor GTPase superfamily. Classic translation factor GTPase family. EF-Tu/EF-1A subfamily. As to quaternary structure, monomer.

The protein localises to the plastid. It is found in the apicoplast. It catalyses the reaction GTP + H2O = GDP + phosphate + H(+). In terms of biological role, GTP hydrolase that promotes the GTP-dependent binding of aminoacyl-tRNA to the A-site of ribosomes during protein biosynthesis. The polypeptide is Elongation factor Tu, apicoplast (tufA) (Toxoplasma gondii).